Here is a 345-residue protein sequence, read N- to C-terminus: Protein lifeguard 1 (345 aa).

The tract at residues 1-115 (MSHEKSFLVS…GNYQEEGPPS (115 aa)) is disordered. Composition is skewed to pro residues over residues 24 to 46 (APMPPYVQAPYPGAPYPQAPFQP) and 79 to 98 (GPYPQSPFPPNPYGQPPPFQ). Transmembrane regions (helical) follow at residues 139-159 (VFLVLTLQLSVTLSTVAIFTF), 171-191 (VWTYYVSYAIFFISLIVLSCC), 202-222 (LVALSILTVSLSYMVGMIASF), 227-247 (AVIMAVGITTAVCFTVVIFSM), 257-277 (MGVLLVSVVVLFIFAILCIFI), 281-301 (ILEIVYASLGALLFTCFLAVD), and 320-340 (FAALNLYTDIINIFLYILTII).

It belongs to the BI1 family. LFG subfamily.

It is found in the membrane. Potential apoptotic regulator. This Mus musculus (Mouse) protein is Protein lifeguard 1 (Grina).